Consider the following 74-residue polypeptide: Acyl carrier protein (74 aa).

In terms of domain architecture, Carrier spans 1 to 73 (MAVFEKVQEI…DLVAYVEEKS (73 aa)). The residue at position 35 (S35) is an O-(pantetheine 4'-phosphoryl)serine.

This sequence belongs to the acyl carrier protein (ACP) family. 4'-phosphopantetheine is transferred from CoA to a specific serine of apo-ACP by AcpS. This modification is essential for activity because fatty acids are bound in thioester linkage to the sulfhydryl of the prosthetic group.

The protein resides in the cytoplasm. It functions in the pathway lipid metabolism; fatty acid biosynthesis. In terms of biological role, carrier of the growing fatty acid chain in fatty acid biosynthesis. The protein is Acyl carrier protein of Streptococcus pyogenes serotype M1.